We begin with the raw amino-acid sequence, 357 residues long: Adenosine deaminase (357 aa).

Zn(2+) contacts are provided by H16 and H18. Substrate contacts are provided by H18, D20, and G185. H212 is a binding site for Zn(2+). E215 (proton donor) is an active-site residue. D294 is a Zn(2+) binding site. Position 295 (D295) interacts with substrate.

It belongs to the metallo-dependent hydrolases superfamily. Adenosine and AMP deaminases family. Zn(2+) serves as cofactor.

It localises to the cell membrane. The protein resides in the cell junction. The protein localises to the cytoplasmic vesicle lumen. Its subcellular location is the cytoplasm. It is found in the lysosome. It catalyses the reaction adenosine + H2O + H(+) = inosine + NH4(+). The enzyme catalyses 2'-deoxyadenosine + H2O + H(+) = 2'-deoxyinosine + NH4(+). Its function is as follows. Catalyzes the hydrolytic deamination of adenosine and 2-deoxyadenosine. Plays an important role in purine metabolism and in adenosine homeostasis. Modulates signaling by extracellular adenosine, and so contributes indirectly to cellular signaling events. May act as a positive regulator of T-cell coactivation. The chain is Adenosine deaminase (ADA) from Gallus gallus (Chicken).